Here is a 577-residue protein sequence, read N- to C-terminus: Proline--tRNA ligase (577 aa).

The protein belongs to the class-II aminoacyl-tRNA synthetase family. ProS type 1 subfamily. As to quaternary structure, homodimer.

The protein resides in the cytoplasm. It catalyses the reaction tRNA(Pro) + L-proline + ATP = L-prolyl-tRNA(Pro) + AMP + diphosphate. Catalyzes the attachment of proline to tRNA(Pro) in a two-step reaction: proline is first activated by ATP to form Pro-AMP and then transferred to the acceptor end of tRNA(Pro). As ProRS can inadvertently accommodate and process non-cognate amino acids such as alanine and cysteine, to avoid such errors it has two additional distinct editing activities against alanine. One activity is designated as 'pretransfer' editing and involves the tRNA(Pro)-independent hydrolysis of activated Ala-AMP. The other activity is designated 'posttransfer' editing and involves deacylation of mischarged Ala-tRNA(Pro). The misacylated Cys-tRNA(Pro) is not edited by ProRS. This is Proline--tRNA ligase from Chlamydia abortus (strain DSM 27085 / S26/3) (Chlamydophila abortus).